The primary structure comprises 194 residues: Holliday junction branch migration complex subunit RuvA (194 aa).

The domain I stretch occupies residues 1–64 (MISRLTGKLV…EDAHLLFGFA (64 aa)). Residues 65–143 (TAEERKTFRQ…AHAVTDGLFA (79 aa)) are domain II. Residues 144–147 (AAPA) form a flexible linker region. The tract at residues 147–194 (AADETEDIVGTLLALGYSEREAKAAVKGVPKGTDVGEGVRLALKNLLK) is domain III.

This sequence belongs to the RuvA family. In terms of assembly, homotetramer. Forms an RuvA(8)-RuvB(12)-Holliday junction (HJ) complex. HJ DNA is sandwiched between 2 RuvA tetramers; dsDNA enters through RuvA and exits via RuvB. An RuvB hexamer assembles on each DNA strand where it exits the tetramer. Each RuvB hexamer is contacted by two RuvA subunits (via domain III) on 2 adjacent RuvB subunits; this complex drives branch migration. In the full resolvosome a probable DNA-RuvA(4)-RuvB(12)-RuvC(2) complex forms which resolves the HJ.

Its subcellular location is the cytoplasm. Functionally, the RuvA-RuvB-RuvC complex processes Holliday junction (HJ) DNA during genetic recombination and DNA repair, while the RuvA-RuvB complex plays an important role in the rescue of blocked DNA replication forks via replication fork reversal (RFR). RuvA specifically binds to HJ cruciform DNA, conferring on it an open structure. The RuvB hexamer acts as an ATP-dependent pump, pulling dsDNA into and through the RuvAB complex. HJ branch migration allows RuvC to scan DNA until it finds its consensus sequence, where it cleaves and resolves the cruciform DNA. This Neisseria meningitidis serogroup C / serotype 2a (strain ATCC 700532 / DSM 15464 / FAM18) protein is Holliday junction branch migration complex subunit RuvA.